Here is a 480-residue protein sequence, read N- to C-terminus: NADH-quinone oxidoreductase subunit N (480 aa).

A run of 14 helical transmembrane segments spans residues 11 to 31 (LLPE…GVFA), 38 to 58 (LVAA…AGLL), 76 to 96 (FALY…IAAA), 105 to 125 (APEY…LVSM), 128 to 148 (LFGV…MVAF), 163 to 183 (LITG…IYGV), 195 to 215 (AFGE…ISGL), 240 to 260 (AAFL…RILL), 270 to 290 (WTAL…LLAL), 298 to 318 (MLAY…AALQ), 329 to 349 (VMIY…TIDL), 368 to 388 (AAAM…SGFF), 407 to 427 (VAVA…FGII), and 453 to 473 (VYAM…LAAL).

Belongs to the complex I subunit 2 family. As to quaternary structure, NDH-1 is composed of 14 different subunits. Subunits NuoA, H, J, K, L, M, N constitute the membrane sector of the complex.

It is found in the cell membrane. The enzyme catalyses a quinone + NADH + 5 H(+)(in) = a quinol + NAD(+) + 4 H(+)(out). Its function is as follows. NDH-1 shuttles electrons from NADH, via FMN and iron-sulfur (Fe-S) centers, to quinones in the respiratory chain. The immediate electron acceptor for the enzyme in this species is believed to be a menaquinone. Couples the redox reaction to proton translocation (for every two electrons transferred, four hydrogen ions are translocated across the cytoplasmic membrane), and thus conserves the redox energy in a proton gradient. In Rubrobacter xylanophilus (strain DSM 9941 / JCM 11954 / NBRC 16129 / PRD-1), this protein is NADH-quinone oxidoreductase subunit N.